The sequence spans 391 residues: Chalcone synthase (391 aa).

Cysteine 164 is a catalytic residue.

Belongs to the thiolase-like superfamily. Chalcone/stilbene synthases family.

It catalyses the reaction (E)-4-coumaroyl-CoA + 3 malonyl-CoA + 3 H(+) = 2',4,4',6'-tetrahydroxychalcone + 3 CO2 + 4 CoA. It functions in the pathway secondary metabolite biosynthesis; flavonoid biosynthesis. The primary product of this enzyme is 4,2',4',6'-tetrahydroxychalcone (also termed naringenin-chalcone or chalcone) which can under specific conditions spontaneously isomerize into naringenin. This is Chalcone synthase (CHS) from Dianthus monspessulanus.